The chain runs to 71 residues: Protein CYSTEINE-RICH TRANSMEMBRANE MODULE 4 (71 aa).

A compositionally biased stretch (polar residues) spans 1–12 (MSQYSQNQSSGA). A disordered region spans residues 1 to 31 (MSQYSQNQSSGAYPTPPVSTGPYMTPPPLGY). Positions 14 to 30 (PTPPVSTGPYMTPPPLG) are enriched in pro residues. The chain crosses the membrane as a helical span at residues 48-64 (SKGDGFLKGCLAAMCCC).

The protein belongs to the CYSTM1 family. Heterodimers. Interacts with CYSTM6, CYSTM7, CYSTM12 and WIH1/CYSTM13. Mostly expressed in roots, stems, rosette leaves and siliques and, to a lower extent, in flowers and cauline leaves.

The protein resides in the cell membrane. The protein localises to the cytoplasm. Its function is as follows. Involved in resistance to abiotic stress. This chain is Protein CYSTEINE-RICH TRANSMEMBRANE MODULE 4, found in Arabidopsis thaliana (Mouse-ear cress).